Consider the following 265-residue polypeptide: Zearalenone hydrolase (265 aa).

Residues glycine 35, serine 105, and serine 106 each coordinate zearalenone. The active site involves serine 105. Glutamate 129 is a catalytic residue. Zearalenone-binding residues include tryptophan 185, tyrosine 189, and histidine 243. Residue histidine 243 is part of the active site.

This sequence belongs to the AB hydrolase superfamily. Hydrolase RutD family. Homodimer.

It carries out the reaction zearalenone + H2O = hydrolyzed zearalenone + H(+). Lactonohydrolase that specifically hydrolyzes zearalenone (ZEN), an oestrogenic mycotoxin produced by numerous Fusarium specie, into a non-toxic alkylresorcinol product. The polypeptide is Zearalenone hydrolase (Cladophialophora bantiana (strain ATCC 10958 / CDC1940 / 8579 / CBS 173.52) (Xylohypha bantiana)).